The primary structure comprises 465 residues: Ribulose bisphosphate carboxylase large chain (465 aa).

Lys-4 carries the post-translational modification N6,N6,N6-trimethyllysine. Positions 113 and 163 each coordinate substrate. Lys-165 serves as the catalytic Proton acceptor. Lys-167 contacts substrate. Lys-191, Asp-193, and Glu-194 together coordinate Mg(2+). Lys-191 carries the N6-carboxylysine modification. His-284 (proton acceptor) is an active-site residue. The substrate site is built by Arg-285, His-317, and Ser-369.

Belongs to the RuBisCO large chain family. Type I subfamily. In terms of assembly, heterohexadecamer of 8 large chains and 8 small chains; disulfide-linked. The disulfide link is formed within the large subunit homodimers. The cofactor is Mg(2+). The disulfide bond which can form in the large chain dimeric partners within the hexadecamer appears to be associated with oxidative stress and protein turnover.

The protein localises to the plastid. The protein resides in the chloroplast. The enzyme catalyses 2 (2R)-3-phosphoglycerate + 2 H(+) = D-ribulose 1,5-bisphosphate + CO2 + H2O. It catalyses the reaction D-ribulose 1,5-bisphosphate + O2 = 2-phosphoglycolate + (2R)-3-phosphoglycerate + 2 H(+). RuBisCO catalyzes two reactions: the carboxylation of D-ribulose 1,5-bisphosphate, the primary event in carbon dioxide fixation, as well as the oxidative fragmentation of the pentose substrate in the photorespiration process. Both reactions occur simultaneously and in competition at the same active site. The sequence is that of Ribulose bisphosphate carboxylase large chain from Bursera inaguensis (Elaphrium inaguense).